Here is a 180-residue protein sequence, read N- to C-terminus: Decaprenylphosphoryl-5-phosphoribose phosphatase (180 aa).

4 consecutive transmembrane segments (helical) span residues 31 to 51, 61 to 81, 116 to 136, and 139 to 159; these read ALSH…AGAL, LAVG…KRVV, VLLA…PMAL, and LVLG…GALV.

The protein belongs to the PA-phosphatase related phosphoesterase family.

It is found in the cell membrane. The catalysed reaction is trans,octa-cis-decaprenylphospho-beta-D-ribofuranose 5-phosphate + H2O = trans,octa-cis-decaprenylphospho-beta-D-ribofuranose + phosphate. It functions in the pathway cell wall biogenesis; cell wall polysaccharide biosynthesis. Its function is as follows. Phosphatase involved in the biosynthesis of decaprenylphosphoryl arabinose (DPA), which serves as the arabinose donor for the biosynthesis of arabinogalactan, the major mycobacterial cell wall polysaccharide. Catalyzes the dephosphorylation of decaprenylphosphoryl-5-phosphoribose (DPPR) to decaprenyl-phosphoribose (DPR). The sequence is that of Decaprenylphosphoryl-5-phosphoribose phosphatase from Mycolicibacterium smegmatis (strain ATCC 700084 / mc(2)155) (Mycobacterium smegmatis).